The primary structure comprises 359 residues: Protein HEXIM1 (359 aa).

A disordered region spans residues 1–163 (MAEPFLSEYQ…RRRPSKKKRH (163 aa)). Residues 9-19 (YQHQPQTSNCT) show a composition bias toward polar residues. Basic and acidic residues-rich tracts occupy residues 34 to 47 (PGAE…DSRW) and 84 to 93 (CLREGEKGQN). 2 positions are modified to phosphoserine: serine 97 and serine 98. Positions 148–163 (LGKKKHRRRPSKKKRH) are enriched in basic residues. The interval 150 to 177 (KKKHRRRPSKKKRHWKPYYKLTWEEKKK) is basic region; mediates nuclear localization and interaction with 7SK snRNA and NR3C1. The segment at 202–205 (PYNT) is interaction with P-TEFb. The interval 210 to 250 (MDDHDQEEPDLKTGLYSKRAAAKSDDTSDDDFMEEGGEEDG) is autoinhibitory acidic region; in absence of 7SK snRNA interacts with the basic region preventing interaction with P-TEFb and modulating subcellular localization. The interval 213–262 (HDQEEPDLKTGLYSKRAAAKSDDTSDDDFMEEGGEEDGGSDGMGGDGSEF) is disordered. At serine 233 the chain carries Phosphoserine. Threonine 236 is modified (phosphothreonine). Positions 236–251 (TSDDDFMEEGGEEDGG) are enriched in acidic residues. Phosphoserine occurs at positions 237, 252, and 260. A coiled-coil region spans residues 283-349 (SKQELIKEYL…LTENELHRQQ (67 aa)). Positions 286–314 (ELIKEYLELEKCLSRMEDENNRLRLESKR) are mediates interaction with CCNT1. Residues 310–355 (LESKRLGGDDARVRELELELDRLRAENLQLLTENELHRQQERAPLS) are required for inhibition of ESR1-dependent transcription.

Belongs to the HEXIM family. In terms of assembly, homooligomer and heterooligomer with HEXIM2; probably dimeric. Core component of the 7SK RNP complex, at least composed of 7SK RNA, LARP7, MEPCE, HEXIM1 (or HEXIM2) and P-TEFb (composed of CDK9 and CCNT1/cyclin-T1). Interacts with the N-CoR complex through NCOR1. Interacts with ESR1 and NR3C1. May interact with NF-kappa-B through RELA. Interacts with CCNT2; mediates formation of a tripartite complex with KPNA2. Part of the HDP-RNP complex composed of at least HEXIM1, PRKDC, XRCC5, XRCC6, paraspeckle proteins (SFPQ, NONO, PSPC1, RBM14, and MATR3) and NEAT1 non-coding RNA. As to expression, ubiquitously expressed with higher expression in placenta. HEXIM1 and HEXIM2 are differentially expressed. Expressed in endocrine tissues.

It is found in the nucleus. It localises to the cytoplasm. Its function is as follows. Transcriptional regulator which functions as a general RNA polymerase II transcription inhibitor. Core component of the 7SK RNP complex: in cooperation with 7SK snRNA sequesters P-TEFb in a large inactive 7SK snRNP complex preventing RNA polymerase II phosphorylation and subsequent transcriptional elongation. May also regulate NF-kappa-B, ESR1, NR3C1 and CIITA-dependent transcriptional activity. Plays a role in the regulation of DNA virus-mediated innate immune response by assembling into the HDP-RNP complex, a complex that serves as a platform for IRF3 phosphorylation and subsequent innate immune response activation through the cGAS-STING pathway. The sequence is that of Protein HEXIM1 (HEXIM1) from Homo sapiens (Human).